The chain runs to 433 residues: Enolase (433 aa).

Position 163 (glutamine 163) interacts with (2R)-2-phosphoglycerate. Residue glutamate 205 is the Proton donor of the active site. Aspartate 242, glutamate 291, and aspartate 318 together coordinate Mg(2+). Residues lysine 343, arginine 372, serine 373, and lysine 394 each coordinate (2R)-2-phosphoglycerate. Lysine 343 serves as the catalytic Proton acceptor.

The protein belongs to the enolase family. The cofactor is Mg(2+).

Its subcellular location is the cytoplasm. The protein localises to the secreted. It localises to the cell surface. It carries out the reaction (2R)-2-phosphoglycerate = phosphoenolpyruvate + H2O. It functions in the pathway carbohydrate degradation; glycolysis; pyruvate from D-glyceraldehyde 3-phosphate: step 4/5. Its function is as follows. Catalyzes the reversible conversion of 2-phosphoglycerate (2-PG) into phosphoenolpyruvate (PEP). It is essential for the degradation of carbohydrates via glycolysis. This is Enolase from Methylibium petroleiphilum (strain ATCC BAA-1232 / LMG 22953 / PM1).